The chain runs to 189 residues: Protein sisterless A (189 aa).

The interval 93-124 (DCRGSGSGSGSGSGSDVKDAQRQRAESCRKSR) is disordered. Over residues 108-121 (DVKDAQRQRAESCR) the composition is skewed to basic and acidic residues.

In terms of assembly, homodimer. Interacts with dpn (via bHLH motif). Interacts with da (via bHLH motif). Interacts with Bap60. In terms of tissue distribution, localizes to all the embryonic nuclei until nuclear cycle 9, when expression ceases in the prepole cell nuclei. Associates with the somatic nuclei through cycle 10. By nuclear cycle 12, distributes uniformly in the somatic portion of the embryo and no longer associates with the nuclei. After early cycle 14 (beginning of cellularization) there is very little or no expression in the periphery of the embryo or in either the somatic or germ cells. In the yolk, accumulates at the nuclei from nuclear cycle 8 until 10-11 hours after fertilization.

It localises to the nucleus. Involved in sex determination and dosage compensation. Required for proper expression of Sxl in embryonic somatic cells. Also has an essential function in the yolk nuclei. Involved in endoderm migration and midgut formation. The sequence is that of Protein sisterless A (sisA) from Drosophila melanogaster (Fruit fly).